The primary structure comprises 229 residues: Peptidase E (229 aa).

Residues Ser120, Asp135, and His157 each act as charge relay system in the active site.

It belongs to the peptidase S51 family.

The protein resides in the cytoplasm. The enzyme catalyses Dipeptidase E catalyzes the hydrolysis of dipeptides Asp-|-Xaa. It does not act on peptides with N-terminal Glu, Asn or Gln, nor does it cleave isoaspartyl peptides.. Its function is as follows. Hydrolyzes dipeptides containing N-terminal aspartate residues. May play a role in allowing the cell to use peptide aspartate to spare carbon otherwise required for the synthesis of the aspartate family of amino acids. The polypeptide is Peptidase E (Salmonella typhi).